The following is a 495-amino-acid chain: Aspartyl/glutamyl-tRNA(Asn/Gln) amidotransferase subunit B (495 aa).

Belongs to the GatB/GatE family. GatB subfamily. In terms of assembly, heterotrimer of A, B and C subunits.

It carries out the reaction L-glutamyl-tRNA(Gln) + L-glutamine + ATP + H2O = L-glutaminyl-tRNA(Gln) + L-glutamate + ADP + phosphate + H(+). The enzyme catalyses L-aspartyl-tRNA(Asn) + L-glutamine + ATP + H2O = L-asparaginyl-tRNA(Asn) + L-glutamate + ADP + phosphate + 2 H(+). Its function is as follows. Allows the formation of correctly charged Asn-tRNA(Asn) or Gln-tRNA(Gln) through the transamidation of misacylated Asp-tRNA(Asn) or Glu-tRNA(Gln) in organisms which lack either or both of asparaginyl-tRNA or glutaminyl-tRNA synthetases. The reaction takes place in the presence of glutamine and ATP through an activated phospho-Asp-tRNA(Asn) or phospho-Glu-tRNA(Gln). The polypeptide is Aspartyl/glutamyl-tRNA(Asn/Gln) amidotransferase subunit B (Prochlorococcus marinus (strain MIT 9313)).